Consider the following 159-residue polypeptide: 6,7-dimethyl-8-ribityllumazine synthase (159 aa).

5-amino-6-(D-ribitylamino)uracil-binding positions include Phe23, Ser61–Glu63, and Ala85–Ile87. Asp90–Thr91 serves as a coordination point for (2S)-2-hydroxy-3-oxobutyl phosphate. The Proton donor role is filled by His93. Phe118 contributes to the 5-amino-6-(D-ribitylamino)uracil binding site. A (2S)-2-hydroxy-3-oxobutyl phosphate-binding site is contributed by Arg132.

The protein belongs to the DMRL synthase family.

The catalysed reaction is (2S)-2-hydroxy-3-oxobutyl phosphate + 5-amino-6-(D-ribitylamino)uracil = 6,7-dimethyl-8-(1-D-ribityl)lumazine + phosphate + 2 H2O + H(+). Its pathway is cofactor biosynthesis; riboflavin biosynthesis; riboflavin from 2-hydroxy-3-oxobutyl phosphate and 5-amino-6-(D-ribitylamino)uracil: step 1/2. In terms of biological role, catalyzes the formation of 6,7-dimethyl-8-ribityllumazine by condensation of 5-amino-6-(D-ribitylamino)uracil with 3,4-dihydroxy-2-butanone 4-phosphate. This is the penultimate step in the biosynthesis of riboflavin. The chain is 6,7-dimethyl-8-ribityllumazine synthase from Synechococcus sp. (strain RCC307).